The primary structure comprises 238 residues: Ribonuclease PH (238 aa).

Residues arginine 86 and 124–126 (GTR) contribute to the phosphate site.

It belongs to the RNase PH family. In terms of assembly, homohexameric ring arranged as a trimer of dimers.

The enzyme catalyses tRNA(n+1) + phosphate = tRNA(n) + a ribonucleoside 5'-diphosphate. In terms of biological role, phosphorolytic 3'-5' exoribonuclease that plays an important role in tRNA 3'-end maturation. Removes nucleotide residues following the 3'-CCA terminus of tRNAs; can also add nucleotides to the ends of RNA molecules by using nucleoside diphosphates as substrates, but this may not be physiologically important. Probably plays a role in initiation of 16S rRNA degradation (leading to ribosome degradation) during starvation. This chain is Ribonuclease PH, found in Geobacter sulfurreducens (strain ATCC 51573 / DSM 12127 / PCA).